Here is a 293-residue protein sequence, read N- to C-terminus: Ribosomal protein L11 methyltransferase (293 aa).

S-adenosyl-L-methionine is bound by residues Thr-145, Gly-166, Asp-188, and Asn-230.

The protein belongs to the methyltransferase superfamily. PrmA family.

The protein localises to the cytoplasm. It carries out the reaction L-lysyl-[protein] + 3 S-adenosyl-L-methionine = N(6),N(6),N(6)-trimethyl-L-lysyl-[protein] + 3 S-adenosyl-L-homocysteine + 3 H(+). Its function is as follows. Methylates ribosomal protein L11. In Escherichia coli (strain SMS-3-5 / SECEC), this protein is Ribosomal protein L11 methyltransferase.